The chain runs to 281 residues: Merozoite surface protein 2 (281 aa).

Positions 1-20 (MKVIKTLSIINFFIFVTFNI) are cleaved as a signal peptide. Asn-22 and Asn-36 each carry an N-linked (GlcNAc...) asparagine glycan. A disordered region spans residues 42-242 (SMEESNPPTG…DSQKECTDGN (201 aa)). The interval 44–207 (EESNPPTGAS…EQTESPELQS (164 aa)) is polymorphic region. Tandem repeats lie at residues 51–58 (GASGRAGA), 59–66 (GASGRAGA), and 67–74 (GASGRAGA). The 3 X 8 AA tandem repeats of G-A-S-G-R-A-G-A stretch occupies residues 51–74 (GASGRAGAGASGRAGAGASGRAGA). Over residues 54–76 (GRAGAGASGRAGAGASGRAGAGA) the composition is skewed to gly residues. Positions 77–133 (GAVASAGSGDGAVASAGNGANPGADAKRSTSTPATTTTTTTTNDAEASTSTSSENPN) are enriched in low complexity. 2 stretches are compositionally biased toward polar residues: residues 150 to 174 (NKANTETQNNSNVQQDSQTKSNVPP) and 181 to 209 (KSPTAQPEQAENSAPTAEQTESPELQSAP). Asn-158 carries N-linked (GlcNAc...) asparagine glycosylation. The N-linked (GlcNAc...) asparagine glycan is linked to Asn-230. A disulfide bond links Cys-238 and Cys-246. Asn-254 and Asn-255 each carry an N-linked (GlcNAc...) asparagine glycan. Residue Asn-255 is the site of GPI-anchor amidated asparagine attachment. Residues 256–281 (SSNIASINKFVVLISATLVLSFAIFI) constitute a propeptide, removed in mature form.

It is found in the cell membrane. In terms of biological role, may play a role in the merozoite attachment to the erythrocyte. This is Merozoite surface protein 2 from Plasmodium falciparum (isolate thtn / Thailand).